The primary structure comprises 706 residues: Double-strand break repair protein MRE11 (706 aa).

S2 is subject to N-acetylserine. S2 is modified (phosphoserine). Positions 20, 22, and 60 each coordinate Mn(2+). The tract at residues 87-117 (RPVQFEVISDQSVNFGFSKFPWVNYQDGNLN) is interaction with NBN. Residue N128 participates in Mn(2+) binding. H129 serves as the catalytic Proton donor. Residues H217, H245, and H247 each contribute to the Mn(2+) site. K255 is covalently cross-linked (Glycyl lysine isopeptide (Lys-Gly) (interchain with G-Cter in SUMO2)). Residue S275 is modified to Phosphoserine. A Glycyl lysine isopeptide (Lys-Gly) (interchain with G-Cter in UFM1) cross-link involves residue K282. K339 participates in a covalent cross-link: Glycyl lysine isopeptide (Lys-Gly) (interchain with G-Cter in ubiquitin). Glycyl lysine isopeptide (Lys-Gly) (interchain with G-Cter in SUMO) cross-links involve residues K384 and K468. K481 participates in a covalent cross-link: Glycyl lysine isopeptide (Lys-Gly) (interchain with G-Cter in ubiquitin). Residues 505-514 (FRESRQRNTN) show a composition bias toward basic and acidic residues. The segment at 505 to 706 (FRESRQRNTN…SSSCPRRNRR (202 aa)) is disordered. The segment covering 531–541 (RSQSETSTSAF) has biased composition (polar residues). Basic residues predominate over residues 569 to 579 (GRGRGRGRRGA). 9 positions are modified to asymmetric dimethylarginine: R570, R572, R574, R576, R577, R580, R587, R592, and R594. The GAR motif lies at 570-594 (RGRGRGRRGARGQSSAPRGGSQRGR). The span at 580–589 (RGQSSAPRGG) shows a compositional bias: low complexity. Over residues 603 to 617 (RGRSSKATSSTSRNM) the composition is skewed to polar residues. S618, S640, and S648 each carry phosphoserine. Residues 643-653 (IEVDDSDEDDI) are compositionally biased toward acidic residues. Polar residues predominate over residues 655–679 (PTNSRADQRWSGTTSSKRMSQSQTA). K671 carries the post-translational modification N6-lactoyllysine. Phosphoserine occurs at positions 674, 676, 686, and 699. Acidic residues predominate over residues 684–694 (FESDEDDDDDP).

The protein belongs to the MRE11/RAD32 family. In terms of assembly, component of the MRN complex composed of two heterodimers RAD50 and MRE11 associated with a single NBN. The MRN complexes dimerize on DNA to form joined MRN-MRN oligomers required for DNA double-strand break repair. As part of the MRN complex, interacts with MCM9; the interaction recruits the complex to DNA repair sites. Component of the BASC complex, at least composed of BRCA1, MSH2, MSH6, MLH1, ATM, BLM, RAD50, MRE11 and NBN. Found in a complex with TERF2. Interacts with DCLRE1C/Artemis and DCLRE1B/Apollo. Interacts with ATF2. Interacts with EXD2. Interacts with MRNIP. Interacts with SAMHD1; leading to stimulate 3'-5' exonuclease activity. Interacts (when ubiquitinated) with UBQLN4 (via its UBA domain). Interacts with CYREN (via XLF motif). Interacts with GFI1; promoting methylation by PRMT1. Interacts with DYNLL1; inhibiting the activity of MRE11. Interacts with C1QBP and RAD50; interaction takes place in absence of DNA damage to form the MRC (MRE11-RAD50-C1QBP) complex that inhibits the activity of MRE11. Interacts with AGER/RAGE; AGER is recruited to DNA double-strand break sites where it enhances MRE11 endonuclease activity to promote DNA repair. The cofactor is Mn(2+). Phosphorylated by ATM at Ser-674 and Ser-676 in response to DNA damage, promoting MRE11 activity: phosphorylation activates MRE11 by preventing the interaction between MRE11 and the C1QBP inhibitor. Phosphorylation at Ser-648 by PLK1 primes for phosphorylation at Ser-686 by CK2, inhibiting recruitment of the MRN complex to DNA damage sites. Post-translationally, asymmetric dimethylation by PRMT1 promotes MRE11 exonuclease activity. In terms of processing, lactylation at Lys-671 by CREBBP/CBP in response to DNA damage promotes DNA binding and MRE11 activity. Acetylated on lysine residues by KAT2A /GCN5. Post-translationally, ubiquitinated following DNA damage. Ubiquitination triggers interaction with UBQLN4, leading to MRE11 removal from chromatin and degradation by the proteasome. Ubiquitinated at Lys-339 and Lys-481 by RNF126 via 'Lys-27'- and 'Lys-29'-linked polyubiquitin chains, promoting the exonuclease activity of MRE11. In terms of processing, SUMOylated by PIAS1, stabilizing MRE11 on chromatin during end resection. DeSUMOylated by SENP3 following removal from DNA double-strand breaks (DSBs). Ufmylation at Lys-282 promotes MRE11 activity and is required for activation of the ATM and ATR kinases by the MRN complex.

The protein resides in the nucleus. It localises to the chromosome. Its subcellular location is the telomere. With respect to regulation, interaction with SAMHD1 stimulates the double-strand-specific 3'-5' exonuclease activity. RBBP8/CtIP specifically promotes the endonuclease activity to clear protein-DNA adducts and generate clean double-strand break ends. DYNLL1-binding inhibits the activity of MRE11. MRE11 activity is inhibited by C1QBP: in absence of DNA damage, C1QBP interacts with unphosphorylated MRE11, preventing formation and activity of the MRN complex. Core component of the MRN complex, which plays a central role in double-strand break (DSB) repair, DNA recombination, maintenance of telomere integrity and meiosis. The MRN complex is involved in the repair of DNA double-strand breaks (DSBs) via homologous recombination (HR), an error-free mechanism which primarily occurs during S and G2 phases. The complex (1) mediates the end resection of damaged DNA, which generates proper single-stranded DNA, a key initial steps in HR, and is (2) required for the recruitment of other repair factors and efficient activation of ATM and ATR upon DNA damage. Within the MRN complex, MRE11 possesses both single-strand endonuclease activity and double-strand-specific 3'-5' exonuclease activity. After DSBs, MRE11 is loaded onto DSBs sites and cleaves DNA by cooperating with RBBP8/CtIP to initiate end resection. MRE11 first endonucleolytically cleaves the 5' strand at DNA DSB ends to prevent non-homologous end joining (NHEJ) and licence HR. It then generates a single-stranded DNA gap via 3' to 5' exonucleolytic degradation to create entry sites for EXO1- and DNA2-mediated 5' to 3' long-range resection, which is required for single-strand invasion and recombination. RBBP8/CtIP specifically promotes the endonuclease activity of MRE11 to clear protein-DNA adducts and generate clean double-strand break ends. MRE11 endonuclease activity is also enhanced by AGER/RAGE. The MRN complex is also required for DNA damage signaling via activation of the ATM and ATR kinases: the nuclease activity of MRE11 is not required to activate ATM and ATR. The MRN complex is also required for the processing of R-loops. The MRN complex is involved in the activation of the cGAS-STING pathway induced by DNA damage during tumorigenesis: the MRN complex acts by displacing CGAS from nucleosome sequestration, thereby activating it. In telomeres the MRN complex may modulate t-loop formation. The sequence is that of Double-strand break repair protein MRE11 from Mus musculus (Mouse).